Here is a 233-residue protein sequence, read N- to C-terminus: Glucosamine-6-phosphate deaminase (233 aa).

The active-site Proton acceptor; for enolization step is the aspartate 62. Asparagine 128 acts as the For ring-opening step in catalysis. Histidine 130 functions as the Proton acceptor; for ring-opening step in the catalytic mechanism. The active-site For ring-opening step is glutamate 135.

It belongs to the glucosamine/galactosamine-6-phosphate isomerase family. NagB subfamily.

The enzyme catalyses alpha-D-glucosamine 6-phosphate + H2O = beta-D-fructose 6-phosphate + NH4(+). Its pathway is amino-sugar metabolism; N-acetylneuraminate degradation; D-fructose 6-phosphate from N-acetylneuraminate: step 5/5. In terms of biological role, catalyzes the reversible isomerization-deamination of glucosamine 6-phosphate (GlcN6P) to form fructose 6-phosphate (Fru6P) and ammonium ion. The chain is Glucosamine-6-phosphate deaminase from Streptococcus thermophilus (strain ATCC BAA-491 / LMD-9).